A 478-amino-acid polypeptide reads, in one-letter code: MAGDKKFVEDITPMDEDFAQWYTDIVKKAELADYSSIRGCMIIRPNGYAIWENIQKYVDTKLKEYGHENVSMPIFIPENLLQKEKDHVEGFAPEVAWVTHGGDDELAERLCVRPTSETLFCEHYAKIVQSYKDLPKLYNQWCSVVRWEKTTRPFLRTTEFLWQEGHTIHETKEEAESHSLKILNMYSRLCEDMLAMPVVMGKKTDKEKFAGADDTYTIESLMHDGKALQAGTSHYLGQNFSKAFAIQFSDRNGKLDYPHYTTWAVTTRLIGAIIMVHGDNSGLKLPPRIAPTQAVIIPVAQHKEGVLEKAKELKEKLAKVVRVKLDDSDKMPGWKYSEYEMKGIPLRIEIGPKDIEKNQAVLVRRDNREKTIVSLDEIEIKVQEMLDIIHNSMLEEAKKTRDEKTYVATNMEEFEDTIENKPGFIKAMWCGDRACEDKIREVTGATSRCMPFEQEVVSDTCVCCGKKAKNLVYWGRAY.

The protein belongs to the class-II aminoacyl-tRNA synthetase family. ProS type 3 subfamily. Homodimer.

Its subcellular location is the cytoplasm. It catalyses the reaction tRNA(Pro) + L-proline + ATP = L-prolyl-tRNA(Pro) + AMP + diphosphate. Its function is as follows. Catalyzes the attachment of proline to tRNA(Pro) in a two-step reaction: proline is first activated by ATP to form Pro-AMP and then transferred to the acceptor end of tRNA(Pro). The polypeptide is Proline--tRNA ligase (Clostridium botulinum (strain Kyoto / Type A2)).